The sequence spans 365 residues: Phosphate acyltransferase (365 aa).

It belongs to the PlsX family. Homodimer. Probably interacts with PlsY.

Its subcellular location is the cytoplasm. The enzyme catalyses a fatty acyl-[ACP] + phosphate = an acyl phosphate + holo-[ACP]. It functions in the pathway lipid metabolism; phospholipid metabolism. In terms of biological role, catalyzes the reversible formation of acyl-phosphate (acyl-PO(4)) from acyl-[acyl-carrier-protein] (acyl-ACP). This enzyme utilizes acyl-ACP as fatty acyl donor, but not acyl-CoA. This is Phosphate acyltransferase from Klebsiella pneumoniae subsp. pneumoniae (strain ATCC 700721 / MGH 78578).